A 381-amino-acid polypeptide reads, in one-letter code: DNA primase DnaG (381 aa).

The 87-residue stretch at 173–259 (DAILVVEGRS…EVEDLEKDEI (87 aa)) folds into the Toprim domain. Mg(2+) is bound by residues Glu179, Asp221, and Asp223.

It belongs to the archaeal DnaG primase family. As to quaternary structure, forms a ternary complex with MCM helicase and DNA. Component of the archaeal exosome complex. It depends on Mg(2+) as a cofactor.

The catalysed reaction is ssDNA + n NTP = ssDNA/pppN(pN)n-1 hybrid + (n-1) diphosphate.. RNA polymerase that catalyzes the synthesis of short RNA molecules used as primers for DNA polymerase during DNA replication. Also part of the exosome, which is a complex involved in RNA degradation. Acts as a poly(A)-binding protein that enhances the interaction between heteromeric, adenine-rich transcripts and the exosome. The sequence is that of DNA primase DnaG from Methanothermobacter thermautotrophicus (strain ATCC 29096 / DSM 1053 / JCM 10044 / NBRC 100330 / Delta H) (Methanobacterium thermoautotrophicum).